A 272-amino-acid chain; its full sequence is B3 domain-containing protein Os10g0323000 (272 aa).

Positions 39-132 (RYGENRKHGQ…TLDLLILDKH (94 aa)) form a DNA-binding region, TF-B3 1. The disordered stretch occupies residues 139–171 (PPSKRDLKLKSKRSTHQDSKGHPSNTDPGPSRI). The span at 141-159 (SKRDLKLKSKRSTHQDSKG) shows a compositional bias: basic and acidic residues. The TF-B3 2 DNA-binding region spans 180-272 (ESSANTQLLV…THLGVIVDIF (93 aa)).

It is found in the nucleus. The protein is B3 domain-containing protein Os10g0323000 of Oryza sativa subsp. japonica (Rice).